Here is a 444-residue protein sequence, read N- to C-terminus: Protein giant-lens (444 aa).

The signal sequence occupies residues 1 to 24; that stretch reads MPTTLMLLPCMLLLLLTAAAVAVG. Two-fingered domain 1 part repeat units lie at residues 123-165 and 285-307; these read RDVR…CRCP and CPSSLGVEDGHTIADKTRHYKMC. 8 disulfide bridges follow: Cys141–Cys162, Cys147–Cys285, Cys164–Cys307, Cys316–Cys341, Cys343–Cys370, Cys378–Cys405, Cys384–Cys413, and Cys407–Cys440. 2 Two-fingered domain repeats span residues 316–370 and 378–444; these read CTHF…LFAC and CQRK…MAND. N-linked (GlcNAc...) asparagine glycosylation is present at Asn333.

As to quaternary structure, interacts with spi. As to expression, during embryogenesis, expression is in a segmental pattern in the ectoderm and in the nervous system. In the eye imaginal disks, expression in photoreceptor cells begins a few rows posterior to the morphogenetic furrow. Also expressed in the wing disk. In the adult, expression is seen in the retina and lamina.

It is found in the secreted. Regulates cell determination; development of ommatidia and optic lobe. Is a signaling molecule involved in the process of axon pathfinding in the eye. Part of the Ras pathway regulating programmed cell death in pupal eyes; activated by lozenge (lz). Antagonist for the Egfr receptor (gurken). Inhibits Egfr signaling without interacting directly with the receptor, but instead by sequestering the Egfr-activating ligand spitz (spi). In Drosophila melanogaster (Fruit fly), this protein is Protein giant-lens (aos).